Here is a 523-residue protein sequence, read N- to C-terminus: GMP synthase [glutamine-hydrolyzing] (523 aa).

Residues 8–205 (KILILDFGSQ…VVDICGCETN (198 aa)) form the Glutamine amidotransferase type-1 domain. The active-site Nucleophile is cysteine 85. Catalysis depends on residues histidine 179 and glutamate 181. A GMPS ATP-PPase domain is found at 206 to 398 (WTAENIIEDA…LGLPAEMLNR (193 aa)). ATP is bound at residue 233–239 (SGGVDSS).

As to quaternary structure, homodimer.

The enzyme catalyses XMP + L-glutamine + ATP + H2O = GMP + L-glutamate + AMP + diphosphate + 2 H(+). It functions in the pathway purine metabolism; GMP biosynthesis; GMP from XMP (L-Gln route): step 1/1. Functionally, catalyzes the synthesis of GMP from XMP. This is GMP synthase [glutamine-hydrolyzing] from Histophilus somni (strain 129Pt) (Haemophilus somnus).